Reading from the N-terminus, the 62-residue chain is Excisionase (62 aa).

The sequence is that of Excisionase (xis) from Streptomyces ambofaciens.